Reading from the N-terminus, the 512-residue chain is Activin receptor type-2B (512 aa).

Residues 1 to 24 (MSASWLTLAVLCATLGAGPGHGEA) form the signal peptide. The Extracellular portion of the chain corresponds to 25–137 (ETRECIYYNA…PPPPTPSLLN (113 aa)). Cystine bridges form between Cys-29-Cys-59, Cys-49-Cys-77, Cys-84-Cys-103, Cys-90-Cys-102, and Cys-104-Cys-109. N-linked (GlcNAc...) asparagine glycans are attached at residues Asn-42 and Asn-65. The chain crosses the membrane as a helical span at residues 138–158 (ILVYSLLPIAVLSVAILLAFW). Topologically, residues 159-512 (MYRHRKPPYG…VDLPPKESSI (354 aa)) are cytoplasmic. Residues 190-478 (LQLLEIKARG…LSAGCVEERI (289 aa)) form the Protein kinase domain. ATP contacts are provided by residues 196 to 204 (KARGRFGCV) and Lys-217. Asp-321 (proton acceptor) is an active-site residue.

It belongs to the protein kinase superfamily. TKL Ser/Thr protein kinase family. TGFB receptor subfamily. Mg(2+) serves as cofactor. Mn(2+) is required as a cofactor. In terms of tissue distribution, not expressed in hen anterior pituitary during the ovulatory cycle but expressed in the ovarian follicle.

It localises to the membrane. The catalysed reaction is L-threonyl-[receptor-protein] + ATP = O-phospho-L-threonyl-[receptor-protein] + ADP + H(+). The enzyme catalyses L-seryl-[receptor-protein] + ATP = O-phospho-L-seryl-[receptor-protein] + ADP + H(+). In terms of biological role, on ligand binding, forms a receptor complex consisting of two type II and two type I transmembrane serine/threonine kinases. Type II receptors phosphorylate and activate type I receptors which autophosphorylate, then bind and activate SMAD transcriptional regulators. Receptor for activin A, activin B and inhibin A. May modulate neuropeptide expression in dorsal root ganglia (DRG) neurons and ovarian follicle development. The sequence is that of Activin receptor type-2B (ACVR2B) from Gallus gallus (Chicken).